Reading from the N-terminus, the 133-residue chain is uncharacterized protein (133 aa).

The Response regulatory domain occupies 9–128 (RILVYSDNVQ…VLGRTVLSLL (120 aa)). The residue at position 64 (aspartate 64) is a 4-aspartylphosphate.

This is an uncharacterized protein from Mycobacterium tuberculosis (strain CDC 1551 / Oshkosh).